The chain runs to 1236 residues: MVHPVQVGKRTRMSFGKVNDVTEMPNLIEVQLDSYEWFLREGLHEVFDDINPITNFTGNLVLEFVDYKLDMENIKYSVEECKERDATYAAPLKVSIRLQNNETGEIKEQEVFMGDFPLMTEQGTFVINGAERVIVSQLVRSPGVYYNYSIDKSGKKLYSSTVIPNRGAWLEYETDSNDVIYVRIDKTRKLSISILARAMGLGSDQELLDFFGEEERFRASIEKDNTKTKEEALLEIYKRLRPGEPPTVDSAISLIDTLFFDAKRYDLSRVGRYKFNKKLALNLRIANQVAATDIVNPQTGEIMVEKGQKISRLVAEEIQNAGVKSVDVLIEDKVIRVISNNFVDLKKQVSFDISDLGIKELVHYPTLKEILDNFSDEASIKEEIKKNISKLIPKHIIRDDIFATISYELGLTYGIGYVDDIDHLGNRRLRSVGELLQNQFRIGLSRMERVVKERMTIQDQEAITPQMLINIRPVAAAIKEFFGSSQLSQFMDQTNPLSELTHKRRLSALGPGGLSRERAGFEVRDVHHSHYGRMCPIETPEGPNIGLINSLATFAKVNEYGFIETPYRIVDKENGRATDEIRYFTADEEDQCLIAEAKEPMDENGHFINKKVRVRHLEDILVVPTTDVDLIDVSARQIVSVATAMIPFLENDDASRALMGSNMQRQAVPLLSPQAPIVGTGIEFKAAVDSGVLPKAKNAGVVTYVSGSEIRVKRDSDGGTDVYKLLKFKRSNSGTCINQRPIVDTGEIVYKNQVIADGPSTDLGEIALGKNIRMGFITWEGYNYEDAMLISEELVREDVFTSMHIEEYECEARDTKLGPEEITRDIPNVSDDALKDVDDRGIIRIGAEVRSGDILVGKVTPKGETELTAEERLLRAIFGEKAREVRDTSLRVPHGEAGIIVDIKVFTRENGDELNPGVNELVRCYIAQKRKISVGDKMAGRHGNKGVISRILPEEDMPFLPDGRPLQICLNPLGVPSRMNIGQVLEVHLGWAASHLGWHIATPVFDGATQPEITECMIKAGFREDAKTILYDGRTGEPFDNPVTVGIMYILKLHHLVDDKIHARSTGPYSLVTQQPLGGKAQFGGQRFGEMEVWALEAYGAAHTLQEILTVKSDDVVGRVKTYEAIVKGENIPEPGVPESFKVLIKELQALCLDIKVLNDEHEEVTLKEFVDEDMANLEVNIEGTEEIMVPEPDVLDDDSYDQNNDEDIDEIDYDESVDIADLETELELDDFNDEH.

Residues 1193 to 1212 (PDVLDDDSYDQNNDEDIDEI) form a disordered region. Residues 1194-1212 (DVLDDDSYDQNNDEDIDEI) are compositionally biased toward acidic residues.

It belongs to the RNA polymerase beta chain family. As to quaternary structure, the RNAP catalytic core consists of 2 alpha, 1 beta, 1 beta' and 1 omega subunit. When a sigma factor is associated with the core the holoenzyme is formed, which can initiate transcription.

It carries out the reaction RNA(n) + a ribonucleoside 5'-triphosphate = RNA(n+1) + diphosphate. Functionally, DNA-dependent RNA polymerase catalyzes the transcription of DNA into RNA using the four ribonucleoside triphosphates as substrates. In Clostridium beijerinckii (strain ATCC 51743 / NCIMB 8052) (Clostridium acetobutylicum), this protein is DNA-directed RNA polymerase subunit beta.